The sequence spans 409 residues: MASNEMEKSSKEKEPKTPPPSSTAPPSSQEPSSAVSAGMATPDWSGFQAYSPMPPPHGYVASSPQPHPYMWGVQHMMPPYGTPPHPYVAMYPPGGMYAHPSMPPGSYPYSPYAMPSPNGMTEVSGNTTGGTDGDAKQSEVKEKLPIKRSRGSLGSLNMITGKNNEPGKNSGASANGAYSKSGESASDGSSEGSDGNSQNDSGSGLDGKDAEAASENGGSANGPQNGSAGTPILPVSQTVPIMPMTAAGVPGPPTNLNIGMDYWGAPTSAGIPGMHGKVSTPVPGVVAPGSRDGGHSQPWLQDDRELKRQRRKQSNRESARRSRLRKQAECDELAQRAEVLNEENTNLRAEINKLKSQCEELTTENTSLKDQLSLFPPLEGISMDNDHQEPDTNQTGAAERKVDSYKDST.

Positions 1–16 are enriched in basic and acidic residues; sequence MASNEMEKSSKEKEPK. Disordered stretches follow at residues 1 to 63, 118 to 236, 274 to 327, and 362 to 409; these read MASN…VASS, NGMT…LPVS, MHGK…LRKQ, and TTEN…KDST. Positions 24–34 are enriched in low complexity; that stretch reads APPSSQEPSSA. Positions 133–145 are enriched in basic and acidic residues; the sequence is GDAKQSEVKEKLP. Residues 152 to 178 show a composition bias toward polar residues; sequence SLGSLNMITGKNNEPGKNSGASANGAY. The segment covering 179-203 has biased composition (low complexity); it reads SKSGESASDGSSEGSDGNSQNDSGS. A compositionally biased stretch (polar residues) spans 216 to 228; it reads NGGSANGPQNGSA. The bZIP domain maps to 305-368; the sequence is ELKRQRRKQS…EELTTENTSL (64 aa). The Bipartite nuclear localization signal signature appears at 307–323; it reads KRQRRKQSNRESARRSR. Residues 307–326 form a basic motif region; sequence KRQRRKQSNRESARRSRLRK. Residues 314-327 are compositionally biased toward basic and acidic residues; the sequence is SNRESARRSRLRKQ. A leucine-zipper region spans residues 333–368; that stretch reads LAQRAEVLNEENTNLRAEINKLKSQCEELTTENTSL. The span at 398–409 shows a compositional bias: basic and acidic residues; that stretch reads AERKVDSYKDST.

This sequence belongs to the bZIP family. Monomer, homodimer and heterodimers with BZIP68 and GBF1/BZIP41. Heterodimers with GBF2/BZIP54 and GBF3/BZIP55. Binds DNA as monomer and forms homo- and heterodimers. The monomeric form is redox regulated. Interacts with GIP1.

The protein localises to the nucleus. In terms of biological role, transcriptional activator that binds to the G-box motif (5'-CACGTG-3') and other cis-acting elements with 5'-ACGT-3' core, such as Hex, C-box and as-1 motifs. Possesses high binding affinity to G-box, much lower affinity to Hex and C-box, and little affinity to as-1 element. G-box and G-box-like motifs are cis-acting elements defined in promoters of certain plant genes which are regulated by such diverse stimuli as light-induction or hormone control. Binds to the G-box motif 5'-CACGTG-3' of LHCB2.4 (At3g27690) promoter. May act as transcriptional repressor in light-regulated expression of LHCB2.4. Binds DNA as monomer. DNA-binding activity is redox-dependent. The chain is bZIP transcription factor 16 from Arabidopsis thaliana (Mouse-ear cress).